The primary structure comprises 401 residues: Sorting nexin-4 (401 aa).

Residues 17–139 (FLQCLVTEPR…AFLENPNWNN (123 aa)) enclose the PX domain. The a 1,2-diacyl-sn-glycero-3-phospho-(1D-myo-inositol-3-phosphate) site is built by Arg-60, Ser-62, Lys-86, and Arg-105. Ser-62 is modified (phosphoserine). Residues 190–292 (ISNLEGSIQK…DVEALQEYSA (103 aa)) are a coiled coil.

The protein belongs to the sorting nexin family.

Its subcellular location is the cytoplasm. The protein resides in the cytosol. It localises to the preautophagosomal structure membrane. The protein localises to the endosome membrane. Sorting nexin, involved in the separation or division of vacuoles throughout the entire life cycle of the cells. Involved in retrieval of late-Golgi SNAREs from post-Golgi endosomes to the trans-Golgi network, for cytoplasm to vacuole transport (Cvt), and autophagy of large cargos including mitophagy, pexophagy and glycophagy. The polypeptide is Sorting nexin-4 (snx4) (Schizosaccharomyces pombe (strain 972 / ATCC 24843) (Fission yeast)).